A 156-amino-acid polypeptide reads, in one-letter code: Ribosomal RNA large subunit methyltransferase H (156 aa).

S-adenosyl-L-methionine-binding positions include Leu-72, Gly-104, and 123–128 (FGAMVW).

It belongs to the RNA methyltransferase RlmH family. As to quaternary structure, homodimer.

It is found in the cytoplasm. The enzyme catalyses pseudouridine(1915) in 23S rRNA + S-adenosyl-L-methionine = N(3)-methylpseudouridine(1915) in 23S rRNA + S-adenosyl-L-homocysteine + H(+). Functionally, specifically methylates the pseudouridine at position 1915 (m3Psi1915) in 23S rRNA. The protein is Ribosomal RNA large subunit methyltransferase H of Ruegeria pomeroyi (strain ATCC 700808 / DSM 15171 / DSS-3) (Silicibacter pomeroyi).